The primary structure comprises 208 residues: Protein-L-isoaspartate O-methyltransferase (208 aa).

Serine 59 is an active-site residue.

Belongs to the methyltransferase superfamily. L-isoaspartyl/D-aspartyl protein methyltransferase family.

It is found in the cytoplasm. The enzyme catalyses [protein]-L-isoaspartate + S-adenosyl-L-methionine = [protein]-L-isoaspartate alpha-methyl ester + S-adenosyl-L-homocysteine. Its function is as follows. Catalyzes the methyl esterification of L-isoaspartyl residues in peptides and proteins that result from spontaneous decomposition of normal L-aspartyl and L-asparaginyl residues. It plays a role in the repair and/or degradation of damaged proteins. The polypeptide is Protein-L-isoaspartate O-methyltransferase (Salmonella paratyphi A (strain ATCC 9150 / SARB42)).